A 361-amino-acid polypeptide reads, in one-letter code: Probable cadicidin biosynthesis thioesterase (361 aa).

The 28-residue stretch at 2–29 (RVTVDSEQCVGAGQCVLNAPEVFDQDDD) folds into the 4Fe-4S ferredoxin-type domain. A disordered region spans residues 36-110 (RADPTSGTTR…RRDSPVTTAD (75 aa)). The segment covering 46–61 (RSARRATCARRPRSSS) has biased composition (basic residues). 2 stretches are compositionally biased toward basic and acidic residues: residues 62–74 (RRTE…DRHR) and 94–104 (TDRRQNHRRDS). S201 is a catalytic residue.

Belongs to the thioesterase family.

Its pathway is antibiotic biosynthesis; candicidin biosynthesis. Probable thioesterase involved in the biosynthesis of candicidin. Could release the macrolide ring from the polyketide synthase. The chain is Probable cadicidin biosynthesis thioesterase from Streptomyces griseus.